Consider the following 402-residue polypeptide: Acetate kinase (402 aa).

Asn7 is a binding site for Mg(2+). An ATP-binding site is contributed by Lys14. Arg95 lines the substrate pocket. Asp152 (proton donor/acceptor) is an active-site residue. ATP is bound by residues 212–216, 286–288, and 334–338; these read HLGNG, DMR, and GIGEN. A Mg(2+)-binding site is contributed by Glu388.

Belongs to the acetokinase family. In terms of assembly, homodimer. Mg(2+) serves as cofactor. The cofactor is Mn(2+).

It localises to the cytoplasm. It carries out the reaction acetate + ATP = acetyl phosphate + ADP. Its pathway is metabolic intermediate biosynthesis; acetyl-CoA biosynthesis; acetyl-CoA from acetate: step 1/2. In terms of biological role, catalyzes the formation of acetyl phosphate from acetate and ATP. Can also catalyze the reverse reaction. The sequence is that of Acetate kinase from Nitratidesulfovibrio vulgaris (strain ATCC 29579 / DSM 644 / CCUG 34227 / NCIMB 8303 / VKM B-1760 / Hildenborough) (Desulfovibrio vulgaris).